Here is a 56-residue protein sequence, read N- to C-terminus: Large ribosomal subunit protein bL33 (56 aa).

The protein belongs to the bacterial ribosomal protein bL33 family.

In Treponema pallidum (strain Nichols), this protein is Large ribosomal subunit protein bL33 (rpmG).